Here is a 218-residue protein sequence, read N- to C-terminus: Large ribosomal subunit protein uL4 (218 aa).

Positions 55-83 (THATKTRGMVSGGGKKPWKQKGTGRARQG) are disordered.

It belongs to the universal ribosomal protein uL4 family. In terms of assembly, part of the 50S ribosomal subunit.

Functionally, one of the primary rRNA binding proteins, this protein initially binds near the 5'-end of the 23S rRNA. It is important during the early stages of 50S assembly. It makes multiple contacts with different domains of the 23S rRNA in the assembled 50S subunit and ribosome. Its function is as follows. Forms part of the polypeptide exit tunnel. The chain is Large ribosomal subunit protein uL4 from Bifidobacterium longum (strain DJO10A).